Reading from the N-terminus, the 358-residue chain is UDP-N-acetylglucosamine--N-acetylmuramyl-(pentapeptide) pyrophosphoryl-undecaprenol N-acetylglucosamine transferase (358 aa).

Residues 11–13, Asn-122, Arg-161, Ser-189, Ile-243, 262–267, and Gln-288 contribute to the UDP-N-acetyl-alpha-D-glucosamine site; these read TGG and ALTVCE.

The protein belongs to the glycosyltransferase 28 family. MurG subfamily.

The protein localises to the cell inner membrane. The catalysed reaction is di-trans,octa-cis-undecaprenyl diphospho-N-acetyl-alpha-D-muramoyl-L-alanyl-D-glutamyl-meso-2,6-diaminopimeloyl-D-alanyl-D-alanine + UDP-N-acetyl-alpha-D-glucosamine = di-trans,octa-cis-undecaprenyl diphospho-[N-acetyl-alpha-D-glucosaminyl-(1-&gt;4)]-N-acetyl-alpha-D-muramoyl-L-alanyl-D-glutamyl-meso-2,6-diaminopimeloyl-D-alanyl-D-alanine + UDP + H(+). It functions in the pathway cell wall biogenesis; peptidoglycan biosynthesis. Functionally, cell wall formation. Catalyzes the transfer of a GlcNAc subunit on undecaprenyl-pyrophosphoryl-MurNAc-pentapeptide (lipid intermediate I) to form undecaprenyl-pyrophosphoryl-MurNAc-(pentapeptide)GlcNAc (lipid intermediate II). The sequence is that of UDP-N-acetylglucosamine--N-acetylmuramyl-(pentapeptide) pyrophosphoryl-undecaprenol N-acetylglucosamine transferase from Coxiella burnetii (strain CbuK_Q154) (Coxiella burnetii (strain Q154)).